Here is a 574-residue protein sequence, read N- to C-terminus: Proline--tRNA ligase (574 aa).

The protein belongs to the class-II aminoacyl-tRNA synthetase family. ProS type 1 subfamily. Homodimer.

The protein localises to the cytoplasm. It carries out the reaction tRNA(Pro) + L-proline + ATP = L-prolyl-tRNA(Pro) + AMP + diphosphate. In terms of biological role, catalyzes the attachment of proline to tRNA(Pro) in a two-step reaction: proline is first activated by ATP to form Pro-AMP and then transferred to the acceptor end of tRNA(Pro). As ProRS can inadvertently accommodate and process non-cognate amino acids such as alanine and cysteine, to avoid such errors it has two additional distinct editing activities against alanine. One activity is designated as 'pretransfer' editing and involves the tRNA(Pro)-independent hydrolysis of activated Ala-AMP. The other activity is designated 'posttransfer' editing and involves deacylation of mischarged Ala-tRNA(Pro). The misacylated Cys-tRNA(Pro) is not edited by ProRS. This chain is Proline--tRNA ligase, found in Thioalkalivibrio sulfidiphilus (strain HL-EbGR7).